A 93-amino-acid polypeptide reads, in one-letter code: Defensin-like protein 229 (93 aa).

The signal sequence occupies residues 1–19 (MKSTTLFMVSCVLIFCVLS). 4 disulfide bridges follow: Cys-38–Cys-93, Cys-48–Cys-72, Cys-56–Cys-84, and Cys-70–Cys-86.

Belongs to the DEFL family. In terms of tissue distribution, flower buds.

It localises to the secreted. The polypeptide is Defensin-like protein 229 (SCRL27) (Arabidopsis thaliana (Mouse-ear cress)).